Reading from the N-terminus, the 927-residue chain is F-box only protein 11 (927 aa).

Positions 1–132 are disordered; it reads MNSVRAANRR…STSTTENFGH (132 aa). The segment covering 7–16 has biased composition (basic residues); it reads ANRRPRRVSR. Over residues 17 to 27 the composition is skewed to low complexity; that stretch reads PRPVQQQQQQP. The segment covering 28–68 has biased composition (pro residues); it reads PQQPPPQPPQQQPPQQQPPPPPQQQQQQQPPPPPPPPPPLP. Residues 114–129 are compositionally biased toward polar residues; sequence PTKNSMEGASTSTTEN. The F-box domain occupies 153 to 199; sequence QYLQEKLPDEVVLKIFSYLLEQDLCRAACVCKRFSELANDPILWKRL. PbH1 repeat units follow at residues 395 to 417, 418 to 440, 441 to 463, 464 to 486, 487 to 509, 510 to 532, 533 to 555, 556 to 578, 579 to 601, 602 to 624, 625 to 647, 648 to 670, 671 to 693, 694 to 716, 717 to 739, 740 to 762, 763 to 785, 786 to 808, and 809 to 830; these read GACP…YITD, HAQG…WVKN, HGNP…FTFD, HGMG…EVKA, YANP…YVHE, KGRG…WITS, NSDP…YIFG, DGRG…QIRT, NSCP…YVHE, KGQG…WVTT, GSTP…YFYD, NGHG…QIRT, GSNP…LVYN, SGLG…WIKT, DSNP…CIFN, GGRG…LIST, NSHP…EITN, HATA…FLAS, and GVNV…EKAV. The UBR-type zinc-finger motif lies at 833 to 904; sequence GQCLYKISSY…LSNPCTLAGE (72 aa).

In terms of assembly, component of the SCF(FBXO11) complex consisting of CUL1, RBX1, SKP1 and FBXO11. Interacts with CIITA. In terms of tissue distribution, isoform 5 is expressed in keratinocytes, fibroblasts and melanocytes.

The protein resides in the nucleus. It is found in the chromosome. It functions in the pathway protein modification; protein ubiquitination. In terms of biological role, substrate recognition component of a SCF (SKP1-CUL1-F-box protein) E3 ubiquitin-protein ligase complex which mediates the ubiquitination and subsequent proteasomal degradation of target proteins, such as DTL/CDT2, BCL6, SNAI1 and PRDM1/BLIMP1. The SCF(FBXO11) complex mediates ubiquitination and degradation of BCL6, thereby playing a role in the germinal center B-cells terminal differentiation toward memory B-cells and plasma cells. The SCF(FBXO11) complex also mediates ubiquitination and degradation of DTL, an important step for the regulation of TGF-beta signaling, cell migration and the timing of the cell-cycle progression and exit. The SCF(FBXO11) complex also catalyzes ubiquitination and degradation of GSK3B-phosphorylated SNAI1. Binds to and neddylates phosphorylated p53/TP53, inhibiting its transcriptional activity. Plays a role in the regulatiom of erythropoiesis but not myelopoiesis or megakaryopoiesis. Mechanistically, activates erythroid genes by mediating the degradation of BAHD1, a heterochromatin-associated protein that recruits corepressors to H3K27me3 marks. Participates in macrophage cell death and inflammation in response to bacterial toxins by regulating the expression of complement 5a receptor 1/C5AR1 and IL-1beta. Acts as a critical regulator to determine the level of MHC-II by mediating the recognition of degron at the P/S/T domain of CIITA leading to its ubiquitination and subsequent degradation via the proteasome. Participates in the antiviral repsonse by initiating the activation of TBK1-IRF3-IFN-I axis. Mediates the 'Lys-63'-linked ubiquitination of TRAF3 to strengthen the interaction between TRAF3 and TBK1. In Homo sapiens (Human), this protein is F-box only protein 11.